The primary structure comprises 724 residues: Palmitoyltransferase AKR1 (724 aa).

At 1 to 308 (MSGQLNVAED…HAKMVTFFTP (308 aa)) the chain is on the cytoplasmic side. ANK repeat units follow at residues 54-84 (PTLV…DVKA), 90-119 (EQVS…DVNI), 124-153 (LEAT…DPLI), 157-187 (QGYN…PVDS), 191-220 (TGKT…DVRV), and 224-253 (GGFT…DVFL). The chain crosses the membrane as a helical span at residues 309–329 (WLILGLILSFFAYFSILLAIL). Residues 330-331 (GC) are Lumenal-facing. Residues 332-352 (LLTVLAAGYGLYNFVFPSFIL) form a helical membrane-spanning segment. Residues 353 to 360 (MKRIVIFK) lie on the Cytoplasmic side of the membrane. A helical membrane pass occupies residues 361-381 (TPLLAGILSGTIFWLLYVWLF). Residues 382-392 (KMLPATFDDEP) lie on the Lumenal side of the membrane. A helical membrane pass occupies residues 393-413 (ILNLTVFALFAGVVFLLTKLL). Over 414–489 (QSDPGYIVPA…YNYIGFRNHK (76 aa)) the chain is Cytoplasmic. The region spanning 446-496 (HFCIHSWIRLPLRAKYKRFVHSVILRYDHYCPWIYNYIGFRNHKIFIYFIL) is the DHHC domain. Catalysis depends on cysteine 476, which acts as the S-palmitoyl cysteine intermediate. A helical membrane pass occupies residues 490 to 510 (IFIYFILLLDLGILALAKLCL). Residues 511-543 (EYFDELKDHAKNKDALKCSILSKDLCAGFTYDP) are Lumenal-facing. Residues 544 to 564 (FTLFLLEWVCVQGMWILALSF) traverse the membrane as a helical segment. The Cytoplasmic portion of the chain corresponds to 565–724 (VQFFECLKGV…ERVISIEEIV (160 aa)).

This sequence belongs to the DHHC palmitoyltransferase family. AKR/ZDHHC17 subfamily.

The protein resides in the early endosome membrane. Its subcellular location is the golgi apparatus membrane. The enzyme catalyses L-cysteinyl-[protein] + hexadecanoyl-CoA = S-hexadecanoyl-L-cysteinyl-[protein] + CoA. In terms of biological role, palmitoyltransferase specific for casein kinase 1. In Eremothecium gossypii (strain ATCC 10895 / CBS 109.51 / FGSC 9923 / NRRL Y-1056) (Yeast), this protein is Palmitoyltransferase AKR1 (AKR1).